A 607-amino-acid chain; its full sequence is Proteasome-associated ATPase (607 aa).

Residues 1–17 (MTESDRHDTPKGDRRIS) show a composition bias toward basic and acidic residues. Residues 1–65 (MTESDRHDTP…GRPAADNKEL (65 aa)) form a disordered region. The stretch at 59 to 102 (AADNKELQERVDNLTARNAKLLDTLKDARQQLVALREEVDRLGQ) forms a coiled coil. 294-299 (GCGKTL) is a binding site for ATP. The docks into pockets in the proteasome alpha-ring stretch occupies residues 606–607 (YL).

The protein belongs to the AAA ATPase family. Homohexamer. Assembles into a hexameric ring structure that caps the 20S proteasome core. Strongly interacts with the prokaryotic ubiquitin-like protein Pup through a hydrophobic interface; the interacting region of ARC lies in its N-terminal coiled-coil domain. There is one Pup binding site per ARC hexamer ring. Upon ATP-binding, the C-terminus of ARC interacts with the alpha-rings of the proteasome core, possibly by binding to the intersubunit pockets.

It functions in the pathway protein degradation; proteasomal Pup-dependent pathway. In terms of biological role, ATPase which is responsible for recognizing, binding, unfolding and translocation of pupylated proteins into the bacterial 20S proteasome core particle. May be essential for opening the gate of the 20S proteasome via an interaction with its C-terminus, thereby allowing substrate entry and access to the site of proteolysis. Thus, the C-termini of the proteasomal ATPase may function like a 'key in a lock' to induce gate opening and therefore regulate proteolysis. This is Proteasome-associated ATPase from Gordonia bronchialis (strain ATCC 25592 / DSM 43247 / BCRC 13721 / JCM 3198 / KCTC 3076 / NBRC 16047 / NCTC 10667) (Rhodococcus bronchialis).